The chain runs to 443 residues: Acyl transferase 10 (443 aa).

Active-site proton acceptor residues include His182 and Asp386.

The protein belongs to the plant acyltransferase family.

Involved in the incorporation of ferulate into the cell wall. May act as arabinoxylan feruloyl transferase. May function as p-coumaroyl-CoA transferase involved in glucuronoarabinoxylan modification. The protein is Acyl transferase 10 of Oryza sativa subsp. japonica (Rice).